The following is a 1129-amino-acid chain: Inositol hexakisphosphate and diphosphoinositol-pentakisphosphate kinase 2 (1129 aa).

A Phosphoserine modification is found at Ser-44. Position 59–60 (59–60 (KK)) interacts with substrate. 4 residues coordinate ATP: Arg-140, Lys-193, His-200, and Arg-219. 219 to 220 (RK) serves as a coordination point for substrate. Phosphoserine is present on Ser-229. Residues 243–246 (EEFM) and 252–254 (DVK) contribute to the ATP site. Substrate-binding residues include Lys-254 and Arg-268. ATP is bound by residues Ser-270, Asp-315, and 327–329 (DVN). 332–335 (SFVK) serves as a coordination point for substrate. Residues 377–448 (PTTSGTMMEL…VLDIARQLLM (72 aa)) form a polyphosphoinositide-binding domain region. The disordered stretch occupies residues 904 to 945 (KGCEEDKNLPSGYGYRPASRENEGRRSLKTDDDEPHTSKRDE). Positions 921–945 (ASRENEGRRSLKTDDDEPHTSKRDE) are enriched in basic and acidic residues. 3 positions are modified to phosphoserine: Ser-1051, Ser-1058, and Ser-1066. A disordered region spans residues 1070–1129 (YTPTKILPTPPAALKSSKASSKAAAGGPSQAMAPHTSSRKKSINSKTEGHEPKKSTGKKR). Positions 1081-1098 (AALKSSKASSKAAAGGPS) are enriched in low complexity. Residues Ser-1106 and Ser-1107 each carry the phosphoserine modification.

It belongs to the histidine acid phosphatase family. VIP1 subfamily. As to expression, ubiquitously expressed. Expressed in the cochlear and vestibular sensory hair cells, supporting cells and spiral ganglion neurons.

The protein resides in the cytoplasm. It is found in the cytosol. The enzyme catalyses 1D-myo-inositol hexakisphosphate + ATP = 1-diphospho-1D-myo-inositol 2,3,4,5,6-pentakisphosphate + ADP. It catalyses the reaction 5-diphospho-1D-myo-inositol 1,2,3,4,6-pentakisphosphate + ATP + H(+) = 1,5-bis(diphospho)-1D-myo-inositol 2,3,4,6-tetrakisphosphate + ADP. Functionally, bifunctional inositol kinase that acts in concert with the IP6K kinases IP6K1, IP6K2 and IP6K3 to synthesize the diphosphate group-containing inositol pyrophosphates diphosphoinositol pentakisphosphate, PP-InsP5, and bis-diphosphoinositol tetrakisphosphate, (PP)2-InsP4. PP-InsP5 and (PP)2-InsP4, also respectively called InsP7 and InsP8, regulate a variety of cellular processes, including apoptosis, vesicle trafficking, cytoskeletal dynamics, exocytosis, insulin signaling and neutrophil activation. Phosphorylates inositol hexakisphosphate (InsP6) at position 1 to produce PP-InsP5 which is in turn phosphorylated by IP6Ks to produce (PP)2-InsP4. Alternatively, phosphorylates PP-InsP5 at position 1, produced by IP6Ks from InsP6, to produce (PP)2-InsP4. Required for normal hearing. This Mus musculus (Mouse) protein is Inositol hexakisphosphate and diphosphoinositol-pentakisphosphate kinase 2.